Consider the following 342-residue polypeptide: MVQNIAILGASGYTGAELVRLIATHPSMRIVALSGDRKAGMAMSEVFPFLRHLDLPRLQKIDEINFSNVDLAFCALPHATSQEVISALPRDLKIVDLSADFRLRDPAAYETWYGKPHSAPELQKEAVYGLTEFYRDEIRGARLVAGTGCNAATGQYAIRPLIEAGVIDLDDILIDLKAGVSGAGRSLKENLLHAELSEGTHAYSAGGTHRHLGEFDQEFSKIAGRPVQVRFTPHLTPMNRGILASVHVKGDPQAVHRALADRYLTETFLEVLPFGALPSTRDIRGSNYVHIGVIGDRIPGCALVVAVLDNLCKGSSGQAIQNANLMLGLDEAAGLRLAPVFP.

Residue Cys149 is part of the active site.

Belongs to the NAGSA dehydrogenase family. Type 1 subfamily.

The protein localises to the cytoplasm. The enzyme catalyses N-acetyl-L-glutamate 5-semialdehyde + phosphate + NADP(+) = N-acetyl-L-glutamyl 5-phosphate + NADPH + H(+). It participates in amino-acid biosynthesis; L-arginine biosynthesis; N(2)-acetyl-L-ornithine from L-glutamate: step 3/4. Its function is as follows. Catalyzes the NADPH-dependent reduction of N-acetyl-5-glutamyl phosphate to yield N-acetyl-L-glutamate 5-semialdehyde. The polypeptide is N-acetyl-gamma-glutamyl-phosphate reductase (Cereibacter sphaeroides (strain ATCC 17025 / ATH 2.4.3) (Rhodobacter sphaeroides)).